The chain runs to 406 residues: 2-epi-valiolone synthase (406 aa).

Residues 1-21 (MPSTGSTPILAHDVKSPHRGS) form a disordered region. Residues 105-108 (EPSK), 137-141 (GVLCD), 161-162 (TS), K174, K183, and 201-204 (CLAT) each bind NAD(+). The Zn(2+) site is built by E216, H287, and H304.

It belongs to the sugar phosphate cyclases superfamily. EVS family. NAD(+) is required as a cofactor. The cofactor is Co(2+). Zn(2+) serves as cofactor.

The enzyme catalyses D-sedoheptulose 7-phosphate = 2-epi-valiolone + phosphate. In terms of biological role, catalyzes the conversion of sedoheptulose 7-phosphate to 2-epi-valiolone, which may serve as an alternative precursor for aminocyclitol biosynthesis. The sequence is that of 2-epi-valiolone synthase from Stigmatella aurantiaca (strain DW4/3-1).